The following is a 303-amino-acid chain: N-acetyl-D-glucosamine kinase (303 aa).

Residues Gly4–Lys11 and Gly133–Val140 contribute to the ATP site. Zn(2+) is bound by residues His157, Cys177, Cys179, and Cys184.

This sequence belongs to the ROK (NagC/XylR) family. NagK subfamily.

The catalysed reaction is N-acetyl-D-glucosamine + ATP = N-acetyl-D-glucosamine 6-phosphate + ADP + H(+). The protein operates within cell wall biogenesis; peptidoglycan recycling. Its function is as follows. Catalyzes the phosphorylation of N-acetyl-D-glucosamine (GlcNAc) derived from cell-wall degradation, yielding GlcNAc-6-P. The sequence is that of N-acetyl-D-glucosamine kinase from Erwinia tasmaniensis (strain DSM 17950 / CFBP 7177 / CIP 109463 / NCPPB 4357 / Et1/99).